The primary structure comprises 1203 residues: Cingulin (1203 aa).

Residues 7–357 form a head region; that stretch reads MAEPRGPVDH…VMISSGSTKA (351 aa). A disordered region spans residues 25-48; the sequence is EPVSGAEMGTLRRGGRRPAKDARA. The ZIM signature appears at 48–62; sequence ASTYGVAVRVQGIAG. The interval 54 to 67 is interaction with TJP1/ZO1; the sequence is AVRVQGIAGQPFVV. Positions 89 to 268 are disordered; sequence EASGALGSDF…PPSGFSRSRQ (180 aa). Phosphoserine is present on residues Ser-96, Ser-135, Ser-137, Ser-140, Ser-155, and Ser-165. The segment covering 166–191 has biased composition (polar residues); sequence PGSTIDTAPLSSVDSLINKFDSQLGG. Over residues 207–231 the composition is skewed to basic and acidic residues; it reads EQRKRSKSLDSRLPRDTLEERERQS. Ser-214, Ser-217, Ser-258, Ser-276, Ser-338, and Ser-351 each carry phosphoserine. The segment covering 246–267 has biased composition (low complexity); sequence GSSKQPSQSQSPSPPSGFSRSR. Positions 358–1160 form a coiled coil; that stretch reads VAGQGELTRK…SLEKDSWRKA (803 aa). At Lys-579 the chain carries N6-acetyllysine. Over residues 883-903 the composition is skewed to basic and acidic residues; it reads ARREVADAQRQAKDWASEAEK. 2 disordered regions span residues 883–908 and 1160–1181; these read ARRE…SGGL and ASRS…EEFD. The tail stretch occupies residues 1161 to 1203; it reads SRSAAESALKHEGLSSDEEFDSVYDPSSIASLLTESNLQTSSC. Residues Ser-1175, Ser-1176, and Ser-1182 each carry the phosphoserine modification.

Belongs to the cingulin family. As to quaternary structure, homodimer. Interacts with TJP1/ZO1 and SPEF1.

The protein localises to the cell junction. Its subcellular location is the tight junction. Its function is as follows. Probably plays a role in the formation and regulation of the tight junction (TJ) paracellular permeability barrier. This chain is Cingulin, found in Papio anubis (Olive baboon).